The primary structure comprises 453 residues: Phenylalanine-4-hydroxylase (453 aa).

Ala2 is modified (N-acetylalanine). Residue Ser16 is modified to Phosphoserine. Residues 36–114 enclose the ACT domain; that stretch reads SLIFSLKEEV…TVHELSRDKE (79 aa). Fe cation contacts are provided by His285, His290, and Glu330.

Belongs to the biopterin-dependent aromatic amino acid hydroxylase family. In terms of assembly, homodimer and homotetramer. Fe(2+) is required as a cofactor. Post-translationally, phosphorylation at Ser-16 increases basal activity and facilitates activation by the substrate phenylalanine.

The catalysed reaction is (6R)-L-erythro-5,6,7,8-tetrahydrobiopterin + L-phenylalanine + O2 = (4aS,6R)-4a-hydroxy-L-erythro-5,6,7,8-tetrahydrobiopterin + L-tyrosine. The protein operates within amino-acid degradation; L-phenylalanine degradation; acetoacetate and fumarate from L-phenylalanine: step 1/6. Its activity is regulated as follows. N-terminal region of PAH is thought to contain allosteric binding sites for phenylalanine and to constitute an 'inhibitory' domain that regulates the activity of a catalytic domain in the C-terminal portion of the molecule. In terms of biological role, catalyzes the hydroxylation of L-phenylalanine to L-tyrosine. This is Phenylalanine-4-hydroxylase (Pah) from Mus musculus (Mouse).